We begin with the raw amino-acid sequence, 185 residues long: ATP-dependent protease subunit HslV (185 aa).

Threonine 12 is a catalytic residue. The Na(+) site is built by alanine 168, cysteine 171, and threonine 174.

It belongs to the peptidase T1B family. HslV subfamily. In terms of assembly, a double ring-shaped homohexamer of HslV is capped on each side by a ring-shaped HslU homohexamer. The assembly of the HslU/HslV complex is dependent on binding of ATP.

Its subcellular location is the cytoplasm. It carries out the reaction ATP-dependent cleavage of peptide bonds with broad specificity.. Allosterically activated by HslU binding. Functionally, protease subunit of a proteasome-like degradation complex believed to be a general protein degrading machinery. The protein is ATP-dependent protease subunit HslV of Cereibacter sphaeroides (strain ATCC 17029 / ATH 2.4.9) (Rhodobacter sphaeroides).